The following is a 476-amino-acid chain: ATP synthase subunit beta (476 aa).

161–168 is a binding site for ATP; the sequence is GGAGVGKT.

This sequence belongs to the ATPase alpha/beta chains family. As to quaternary structure, F-type ATPases have 2 components, CF(1) - the catalytic core - and CF(0) - the membrane proton channel. CF(1) has five subunits: alpha(3), beta(3), gamma(1), delta(1), epsilon(1). CF(0) has three main subunits: a(1), b(2) and c(9-12). The alpha and beta chains form an alternating ring which encloses part of the gamma chain. CF(1) is attached to CF(0) by a central stalk formed by the gamma and epsilon chains, while a peripheral stalk is formed by the delta and b chains.

It localises to the cell membrane. The catalysed reaction is ATP + H2O + 4 H(+)(in) = ADP + phosphate + 5 H(+)(out). Functionally, produces ATP from ADP in the presence of a proton gradient across the membrane. The catalytic sites are hosted primarily by the beta subunits. This is ATP synthase subunit beta from Mycolicibacterium gilvum (strain PYR-GCK) (Mycobacterium gilvum (strain PYR-GCK)).